Consider the following 466-residue polypeptide: Alpha-1A adrenergic receptor (466 aa).

Over 1–27 (MVFLSGNASDSSNCTQPPAPVNISKAI) the chain is Extracellular. N7, N13, and N22 each carry an N-linked (GlcNAc...) asparagine glycan. The chain crosses the membrane as a helical span at residues 28 to 51 (LLGVILGGLILFGVLGNILVILSV). Topologically, residues 52–64 (ACHRHLHSVTHYY) are cytoplasmic. The chain crosses the membrane as a helical span at residues 65–88 (IVNLAVADLLLTSTVLPFSAIFEV). Residues 89–99 (LGYWAFGRVFC) are Extracellular-facing. An intrachain disulfide couples C99 to C176. The chain crosses the membrane as a helical span at residues 100–122 (NIWAAVDVLCCTASIMGLCIISI). At 123-143 (DRYIGVSYPLRYPTIVTQRRG) the chain is on the cytoplasmic side. The chain crosses the membrane as a helical span at residues 144–167 (LMALLCVWALSLVISIGPLFGWRQ). The Extracellular segment spans residues 168–181 (PAPEDETICQINEE). The helical transmembrane segment at 182–205 (PGYVLFSALGSFYLPLAIILVMYC) threads the bilayer. Topologically, residues 206-273 (RVYVVAKRES…FSREKKAAKT (68 aa)) are cytoplasmic. Phosphoserine; by PKA is present on S215. Residues 274–297 (LGIVVGCFVLCWLPFFLVMPIGSF) traverse the membrane as a helical segment. Over 298–305 (FPDFKPSE) the chain is Extracellular. The helical transmembrane segment at 306–329 (TVFKIVFWLGYLNSCINPIIYPCS) threads the bilayer. Over 330–466 (SQEFKKAFQN…ISLSENGEEV (137 aa)) the chain is Cytoplasmic. The short motif at 334–349 (KKAFQNVLRIQCLCRK) is the Nuclear localization signal element. Residue C345 is the site of S-palmitoyl cysteine attachment.

The protein belongs to the G-protein coupled receptor 1 family. Adrenergic receptor subfamily. ADRA1A sub-subfamily. As to quaternary structure, homo- and heterooligomer. Heterooligomerizes with ADRA1B homooligomers in cardiac myocytes. Interacts with CAVIN4. Post-translationally, C-terminal Ser or Thr residues may be phosphorylated. Expressed in heart, brain, liver and prostate, but not in kidney, lung, adrenal, aorta and pituitary. Within the prostate, expressed in the apex, base, periurethral and lateral lobe. Isoform 4 is the most abundant isoform expressed in the prostate with high levels also detected in liver and heart.

The protein localises to the nucleus membrane. It localises to the cell membrane. It is found in the cytoplasm. The protein resides in the membrane. Its subcellular location is the caveola. Its function is as follows. This alpha-adrenergic receptor mediates its action by association with G proteins that activate a phosphatidylinositol-calcium second messenger system. Its effect is mediated by G(q) and G(11) proteins. Nuclear ADRA1A-ADRA1B heterooligomers regulate phenylephrine(PE)-stimulated ERK signaling in cardiac myocytes. The chain is Alpha-1A adrenergic receptor (ADRA1A) from Homo sapiens (Human).